Consider the following 814-residue polypeptide: ATP-dependent RNA helicase dbp-7 (814 aa).

Positions 26 to 102 are disordered; sequence GGRWRDRVKA…PPPPPTHAMK (77 aa). Composition is skewed to basic and acidic residues over residues 28–42 and 69–78; these read RWRDRVKAQKGEKGG and QRTEDGDSGR. A Q motif motif is present at residues 145–174; sequence ENFLSLGLSRRVSQHLATKLEMKAPTAIQK. The 207-residue stretch at 178–384 folds into the Helicase ATP-binding domain; the sequence is PQLVKEDSDA…EISLEDAVHI (207 aa). An ATP-binding site is contributed by 191-198; it reads AETGSGKT. The DEAD box signature appears at 313–316; it reads DEGD. The 201-residue stretch at 422-622 folds into the Helicase C-terminal domain; that stretch reads RLVTLIALLK…GFATNINVPG (201 aa). Disordered regions lie at residues 464 to 483, 662 to 695, and 741 to 795; these read TPRAEPEPKPEGEAPTKPNI, ESKSEKFAASKQGKKGKKDAKKDENKTPDNPLLV, and GIGG…AGRR. Residues 467–477 show a composition bias toward basic and acidic residues; sequence AEPEPKPEGEA. Acidic residues predominate over residues 779–790; the sequence is DDDERDFGAADE.

This sequence belongs to the DEAD box helicase family. DDX31/DBP7 subfamily.

It localises to the nucleus. The protein localises to the nucleolus. It catalyses the reaction ATP + H2O = ADP + phosphate + H(+). ATP-binding RNA helicase involved in the biogenesis of 60S ribosomal subunits and is required for the normal formation of 25S and 5.8S rRNAs. The chain is ATP-dependent RNA helicase dbp-7 (dbp-7) from Neurospora crassa (strain ATCC 24698 / 74-OR23-1A / CBS 708.71 / DSM 1257 / FGSC 987).